The sequence spans 530 residues: GMP synthase [glutamine-hydrolyzing] (530 aa).

Residues 4 to 205 (RILILDYGSQ…VKDICGCEGD (202 aa)) enclose the Glutamine amidotransferase type-1 domain. Residue C84 is the Nucleophile of the active site. Residues H179 and E181 contribute to the active site. Residues 206–398 (WNMPDYISEA…LGLPPQMVYR (193 aa)) form the GMPS ATP-PPase domain. 233–239 (SGGVDSS) serves as a coordination point for ATP.

As to quaternary structure, homodimer.

It catalyses the reaction XMP + L-glutamine + ATP + H2O = GMP + L-glutamate + AMP + diphosphate + 2 H(+). It participates in purine metabolism; GMP biosynthesis; GMP from XMP (L-Gln route): step 1/1. Catalyzes the synthesis of GMP from XMP. In Bordetella bronchiseptica (strain ATCC BAA-588 / NCTC 13252 / RB50) (Alcaligenes bronchisepticus), this protein is GMP synthase [glutamine-hydrolyzing].